The following is a 308-amino-acid chain: Very-long-chain enoyl-CoA reductase (308 aa).

Residues 1 to 86 are Cytoplasmic-facing; it reads MKHYEVEILD…YFRDLGAQIS (86 aa). The residue at position 22 (lysine 22) is an N6-acetyllysine. The residue at position 58 (serine 58) is a Phosphoserine. Lysine 60 bears the N6-acetyllysine mark. Residues 87 to 106 traverse the membrane as a helical segment; that stretch reads WVTVFLTEYAGPLFIYLLFY. At 107 to 124 the chain is on the lumenal side; the sequence is FRVPFIYGRKYDFTSSRH. Residues 125–147 form a helical membrane-spanning segment; that stretch reads TVVHLACICHSFHYIKRLLETLF. Over 148 to 158 the chain is Cytoplasmic; it reads VHRFSHGTMPL. A helical transmembrane segment spans residues 159–180; that stretch reads RNIFKNCTYYWGFAAWMAYYIN. Topologically, residues 181–189 are lumenal; sequence HPLYTPPTY. The helical transmembrane segment at 190–216 threads the bilayer; that stretch reads GAQQVKLALAIFVICQLGNFSIHMALR. Residues 217 to 245 lie on the Cytoplasmic side of the membrane; that stretch reads DLRPAGSKTRKIPYPTRNPFTWLFLLVSC. A helical transmembrane segment spans residues 246 to 262; the sequence is PNYTYEVGSWIGFAIMT. The Lumenal portion of the chain corresponds to 263–264; sequence QC. A helical membrane pass occupies residues 265-292; sequence LPVALFSLVGFTQMTIWAKGKHRSYLKE. The Cytoplasmic portion of the chain corresponds to 293-308; it reads FRDYPPLRMPIIPFLL.

Belongs to the steroid 5-alpha reductase family. As to quaternary structure, interacts with ELOVL1 and LASS2. Post-translationally, glycosylated.

It is found in the endoplasmic reticulum membrane. It carries out the reaction a very-long-chain 2,3-saturated fatty acyl-CoA + NADP(+) = a very-long-chain (2E)-enoyl-CoA + NADPH + H(+). It catalyses the reaction octadecanoyl-CoA + NADP(+) = (2E)-octadecenoyl-CoA + NADPH + H(+). The catalysed reaction is (2E,7Z,10Z,13Z,16Z)-docosapentaenoyl-CoA + NADPH + H(+) = (7Z,10Z,13Z,16Z)-docosatetraenoyl-CoA + NADP(+). The enzyme catalyses (2E,7Z,10Z,13Z,16Z,19Z)-docosahexaenoyl-CoA + NADPH + H(+) = (7Z,10Z,13Z,16Z,19Z)-docosapentaenoyl-CoA + NADP(+). It carries out the reaction (2E,8Z,11Z,14Z)-eicosatetraenoyl-CoA + NADPH + H(+) = (8Z,11Z,14Z)-eicosatrienoyl-CoA + NADP(+). It catalyses the reaction (2E)-hexadecenoyl-CoA + NADPH + H(+) = hexadecanoyl-CoA + NADP(+). The protein operates within lipid metabolism; fatty acid biosynthesis. It participates in lipid metabolism; sphingolipid metabolism. Involved in both the production of very long-chain fatty acids for sphingolipid synthesis and the degradation of the sphingosine moiety in sphingolipids through the sphingosine 1-phosphate metabolic pathway. Catalyzes the last of the four reactions of the long-chain fatty acids elongation cycle. This endoplasmic reticulum-bound enzymatic process, allows the addition of 2 carbons to the chain of long- and very long-chain fatty acids/VLCFAs per cycle. This enzyme reduces the trans-2,3-enoyl-CoA fatty acid intermediate to an acyl-CoA that can be further elongated by entering a new cycle of elongation. Thereby, it participates in the production of VLCFAs of different chain lengths that are involved in multiple biological processes as precursors of membrane lipids and lipid mediators. Catalyzes the saturation step of the sphingosine 1-phosphate metabolic pathway, the conversion of trans-2-hexadecenoyl-CoA to palmitoyl-CoA. The polypeptide is Very-long-chain enoyl-CoA reductase (TECR) (Bos taurus (Bovine)).